The sequence spans 448 residues: Methylenetetrahydrofolate--tRNA-(uracil-5-)-methyltransferase TrmFO (448 aa).

10 to 15 contacts FAD; that stretch reads GAGLAG.

It belongs to the MnmG family. TrmFO subfamily. It depends on FAD as a cofactor.

The protein localises to the cytoplasm. It carries out the reaction uridine(54) in tRNA + (6R)-5,10-methylene-5,6,7,8-tetrahydrofolate + NADH + H(+) = 5-methyluridine(54) in tRNA + (6S)-5,6,7,8-tetrahydrofolate + NAD(+). The catalysed reaction is uridine(54) in tRNA + (6R)-5,10-methylene-5,6,7,8-tetrahydrofolate + NADPH + H(+) = 5-methyluridine(54) in tRNA + (6S)-5,6,7,8-tetrahydrofolate + NADP(+). In terms of biological role, catalyzes the folate-dependent formation of 5-methyl-uridine at position 54 (M-5-U54) in all tRNAs. This chain is Methylenetetrahydrofolate--tRNA-(uracil-5-)-methyltransferase TrmFO, found in Lactococcus lactis subsp. cremoris (strain SK11).